The following is a 408-amino-acid chain: L-lactate oxidase (408 aa).

The 357-residue stretch at 14-370 folds into the FMN hydroxy acid dehydrogenase domain; it reads NEAIKMVNVD…KHADIRQINY (357 aa). Y40 contributes to the pyruvate binding site. Residues 93–95, S122, and Q144 each bind FMN; that span reads PIA. Y146 serves as a coordination point for pyruvate. T172 contributes to the FMN binding site. R181 is a pyruvate binding site. FMN-binding residues include K241 and S263. Pyruvate-binding residues include H265 and R268. The active-site Proton acceptor is H265. FMN contacts are provided by residues 296-300 and R320; that span reads DSGVR.

Belongs to the FMN-dependent alpha-hydroxy acid dehydrogenase family. As to quaternary structure, homotetramer. It depends on FMN as a cofactor.

The enzyme catalyses a (2S)-2-hydroxycarboxylate + O2 = a 2-oxocarboxylate + H2O2. The catalysed reaction is (S)-lactate + O2 = pyruvate + H2O2. It carries out the reaction 2-hydroxyoctanoate + O2 = 2-oxooctanoate + H2O2. It catalyses the reaction glycolate + O2 = glyoxylate + H2O2. The enzyme catalyses mandelate + O2 = phenylglyoxylate + H2O2. The catalysed reaction is 2-hydroxyoctadecanoate + O2 = 2-oxooctadecanoate + H2O2. Functionally, oxidase that catalyzes the oxidation of a broad range of 2-hydroxyacids in vitro, such as (S)-lactate, 2-hydroxyoctanoate, and to a lesser extent glycolate, mandelate and 2-hydroxyoctadecanoate, to the corresponding 2-oxoacids, with a reduction of O2 to H2O2. May be involved in the utilization of L-lactate as an energy source for growth. This Lactobacillus jensenii protein is L-lactate oxidase.